The chain runs to 158 residues: Low molecular weight phosphotyrosine protein phosphatase (158 aa).

At A2 the chain carries N-acetylalanine. C13 (nucleophile) is an active-site residue. R19 is an active-site residue. D130 serves as the catalytic Proton donor. Y132 and Y133 each carry phosphotyrosine.

This sequence belongs to the low molecular weight phosphotyrosine protein phosphatase family. Interacts with EPHA2; dephosphorylates EPHA2. Interacts with EPHB1. As to quaternary structure, interacts with the SH3 domain of SPTAN1. There is no interaction observed for isoform 2. Post-translationally, phosphorylated by LCK. Phosphorylation at Tyr-132 increases its phosphatase activity. As to expression, widely expressed with highest levels in brain and liver and lowest levels in muscle.

The protein resides in the cytoplasm. It catalyses the reaction O-phospho-L-tyrosyl-[protein] + H2O = L-tyrosyl-[protein] + phosphate. It carries out the reaction a phosphate monoester + H2O = an alcohol + phosphate. With respect to regulation, inhibited by sulfhydryl reagents. In terms of biological role, acts on tyrosine phosphorylated proteins, low-MW aryl phosphates and natural and synthetic acyl phosphates with differences in substrate specificity between isoform 1 and isoform 2. This is Low molecular weight phosphotyrosine protein phosphatase from Mus musculus (Mouse).